The sequence spans 659 residues: tRNA 5-methylaminomethyl-2-thiouridine biosynthesis bifunctional protein MnmC (659 aa).

The tract at residues 1-236 (MKPVMPHAQL…KWEILRGEFL (236 aa)) is tRNA (mnm(5)s(2)U34)-methyltransferase. The segment at 267 to 659 (IGAGLAGCAT…FALRRLIRGK (393 aa)) is FAD-dependent cmnm(5)s(2)U34 oxidoreductase.

In the N-terminal section; belongs to the methyltransferase superfamily. tRNA (mnm(5)s(2)U34)-methyltransferase family. It in the C-terminal section; belongs to the DAO family. The cofactor is FAD.

Its subcellular location is the cytoplasm. It carries out the reaction 5-aminomethyl-2-thiouridine(34) in tRNA + S-adenosyl-L-methionine = 5-methylaminomethyl-2-thiouridine(34) in tRNA + S-adenosyl-L-homocysteine + H(+). Its function is as follows. Catalyzes the last two steps in the biosynthesis of 5-methylaminomethyl-2-thiouridine (mnm(5)s(2)U) at the wobble position (U34) in tRNA. Catalyzes the FAD-dependent demodification of cmnm(5)s(2)U34 to nm(5)s(2)U34, followed by the transfer of a methyl group from S-adenosyl-L-methionine to nm(5)s(2)U34, to form mnm(5)s(2)U34. The protein is tRNA 5-methylaminomethyl-2-thiouridine biosynthesis bifunctional protein MnmC of Pseudomonas fluorescens (strain Pf0-1).